The following is a 349-amino-acid chain: Defect at low temperature protein 1 (349 aa).

The Cytoplasmic portion of the chain corresponds to 1-18 (MPIIDFEIWKLWLFRSIK). The helical transmembrane segment at 19-39 (AIVIIFLVGFSIVLPVDSIVQ) threads the bilayer. The Extracellular segment spans residues 40–49 (AAESSNTALN). A helical membrane pass occupies residues 50–70 (TFIVVGALVAFGLVSIIIIVG). Over 71–349 (RIIFCRSCIQ…ADSFKYVTHR (279 aa)) the chain is Cytoplasmic. A disordered region spans residues 312-333 (VPTNPEEEHKMALDPQDPVSHK).

It belongs to the DLT1 family.

The protein localises to the membrane. Required for growth under high-pressure and low-temperature conditions. This is Defect at low temperature protein 1 (DLT1) from Zygosaccharomyces rouxii (strain ATCC 2623 / CBS 732 / NBRC 1130 / NCYC 568 / NRRL Y-229).